The primary structure comprises 294 residues: ATP synthase gamma chain (294 aa).

Belongs to the ATPase gamma chain family. In terms of assembly, F-type ATPases have 2 components, CF(1) - the catalytic core - and CF(0) - the membrane proton channel. CF(1) has five subunits: alpha(3), beta(3), gamma(1), delta(1), epsilon(1). CF(0) has three main subunits: a, b and c.

Its subcellular location is the cell inner membrane. Functionally, produces ATP from ADP in the presence of a proton gradient across the membrane. The gamma chain is believed to be important in regulating ATPase activity and the flow of protons through the CF(0) complex. The chain is ATP synthase gamma chain from Rhizobium johnstonii (strain DSM 114642 / LMG 32736 / 3841) (Rhizobium leguminosarum bv. viciae).